The primary structure comprises 48 residues: Lantibiotic salivaricin-A (48 aa).

The propeptide occupies 1–26; sequence MKNSKDILNNAIEEVSEKELMEVAGG. 2 consecutive cross-links (beta-methyllanthionine (Thr-Cys)) follow at residues 35–40 and 37–47; these read TITDDC and TDDCPNSVFVC. Positions 43 to 48 form a cross-link, lanthionine (Ser-Cys); it reads SVFVCC.

Belongs to the type A lantibiotic family. Maturation of lantibiotics involves the enzymatic conversion of Thr, and Ser into dehydrated AA and the formation of thioether bonds with cysteine. This is followed by membrane translocation and cleavage of the modified precursor.

Lanthionine-containing peptide antibiotic (lantibiotic) active on Gram-positive bacteria. The bactericidal activity of lantibiotics is based on depolarization of energized bacterial cytoplasmic membranes, initiated by the formation of aqueous transmembrane pores. This is Lantibiotic salivaricin-A (salA) from Streptococcus salivarius.